The chain runs to 723 residues: Calpastatin (723 aa).

Disordered regions lie at residues 1 to 402 and 422 to 509; these read MNPT…PGRC and STHS…LPPL. Residues 21 to 30 are compositionally biased toward basic residues; the sequence is PNKKRHKKQA. A Glycyl lysine isopeptide (Lys-Gly) (interchain with G-Cter in SUMO2) cross-link involves residue lysine 32. Over residues 46 to 84 the composition is skewed to basic and acidic residues; that stretch reads VVHEKKTQEVKPKEHTEPKSQPKHPSDTRSKHAPKEKAV. Lysine 50 is subject to N6-acetyllysine. Low complexity-rich tracts occupy residues 85–94 and 113–125; these read SKSSEQPPSE and SAVP…ASAE. Serine 87 carries the phosphoserine modification. Residue threonine 137 is modified to Phosphothreonine. The span at 157 to 173 shows a compositional bias: acidic residues; that stretch reads TALDDLIDTLGEPEETK. An Inhibitory domain 1 repeat occupies 171–224; sequence ETKEDTTTYTGPEVSDPMSSTYIEELGKREVTLPPKYRELLNKEEGIAGPPPDS. Residues 195 to 216 are compositionally biased toward basic and acidic residues; sequence ELGKREVTLPPKYRELLNKEEG. Residues serine 224 and serine 245 each carry the phosphoserine modification. Basic and acidic residues-rich tracts occupy residues 249–263 and 306–367; these read DAKK…EEAL and PRPE…KPLS. The Inhibitory domain 2 repeat unit spans residues 307–359; it reads RPELDPSSIKEVDEAKAKEEKVKKCGEDEERVPSEYRLKPATDKDGKPLLPEA. Phosphoserine occurs at positions 367, 369, and 376. The span at 378 to 396 shows a compositional bias: basic and acidic residues; sequence DFDRSKCKEKQSKPTEKNR. Serine 443 is subject to Phosphoserine. The segment covering 445–504 has biased composition (basic and acidic residues); that stretch reads GKKEADPEDGKPVEDKVKEKAKEEDREKLGEREETIPPDYRLEEAKDKDGKPLPPKEVKE. Residues 449–502 form an Inhibitory domain 3 repeat; it reads ADPEDGKPVEDKVKEKAKEEDREKLGEREETIPPDYRLEEAKDKDGKPLPPKEV. Residues serine 519 and serine 530 each carry the phosphoserine modification. Residues 547–723 form a disordered region; that stretch reads SQTPAPTTQA…KPKADGKSTS (177 aa). Residues 548–560 show a composition bias toward low complexity; sequence QTPAPTTQAAGPP. Residues 562–571 show a composition bias toward basic and acidic residues; that stretch reads DSARDNKELD. Residues serine 578 and serine 580 each carry the phosphoserine modification. One copy of the Inhibitory domain 4 repeat lies at 586–642; the sequence is PDPDEHKPVEDKVKEKAKAEHRDKLGERDDTIPPKYQHLLDDNKEGTPGKPKRSESP. Basic and acidic residues predominate over residues 586-643; sequence PDPDEHKPVEDKVKEKAKAEHRDKLGERDDTIPPKYQHLLDDNKEGTPGKPKRSESPR. The segment covering 653–670 has biased composition (polar residues); it reads NLQVPRTPLTPSQGTWTA. Low complexity predominate over residues 672–690; that stretch reads PQLQKPQQTQQRTKTRSLL. Positions 701–723 are enriched in basic and acidic residues; the sequence is KAKDSTKAKEETSKPKADGKSTS.

This sequence belongs to the protease inhibitor I27 (calpastatin) family.

Its function is as follows. Specific inhibition of calpain (calcium-dependent cysteine protease). Plays a key role in postmortem tenderization of meat and have been proposed to be involved in muscle protein degradation in living tissue. The chain is Calpastatin (CAST) from Ovis aries (Sheep).